Consider the following 329-residue polypeptide: Peroxidase 5 (329 aa).

A signal peptide spans 1–26 (MSSKRVTWLSLTWVLVFLCLSVELEA). Gln27 bears the Pyrrolidone carboxylic acid mark. Disulfide bonds link Cys37–Cys117, Cys70–Cys75, Cys123–Cys324, and Cys202–Cys234. The active-site Proton acceptor is His68. Ca(2+) contacts are provided by Asp69, Val72, Gly74, Asp76, and Ser78. Pro165 is a binding site for substrate. His195 is a heme b binding site. Thr196 serves as a coordination point for Ca(2+). A glycan (N-linked (GlcNAc...) asparagine) is linked at Asn213. Positions 251 and 256 each coordinate Ca(2+).

This sequence belongs to the peroxidase family. Classical plant (class III) peroxidase subfamily. Heme b serves as cofactor. It depends on Ca(2+) as a cofactor.

It localises to the secreted. It catalyses the reaction 2 a phenolic donor + H2O2 = 2 a phenolic radical donor + 2 H2O. Its function is as follows. Removal of H(2)O(2), oxidation of toxic reductants, biosynthesis and degradation of lignin, suberization, auxin catabolism, response to environmental stresses such as wounding, pathogen attack and oxidative stress. These functions might be dependent on each isozyme/isoform in each plant tissue. This Vitis vinifera (Grape) protein is Peroxidase 5.